A 603-amino-acid chain; its full sequence is Threonine--tRNA ligase (603 aa).

The segment at 209–500 (DHRKLGNEMK…LIEHCAGELP (292 aa)) is catalytic. 3 residues coordinate Zn(2+): Cys301, His352, and His477.

The protein belongs to the class-II aminoacyl-tRNA synthetase family. As to quaternary structure, homodimer. The cofactor is Zn(2+).

Its subcellular location is the cytoplasm. The enzyme catalyses tRNA(Thr) + L-threonine + ATP = L-threonyl-tRNA(Thr) + AMP + diphosphate + H(+). In terms of biological role, catalyzes the attachment of threonine to tRNA(Thr) in a two-step reaction: L-threonine is first activated by ATP to form Thr-AMP and then transferred to the acceptor end of tRNA(Thr). Also edits incorrectly charged L-seryl-tRNA(Thr). The protein is Threonine--tRNA ligase of Campylobacter lari (strain RM2100 / D67 / ATCC BAA-1060).